Consider the following 431-residue polypeptide: Glutamate-1-semialdehyde 2,1-aminomutase (431 aa).

Position 265 is an N6-(pyridoxal phosphate)lysine (Lys-265).

Belongs to the class-III pyridoxal-phosphate-dependent aminotransferase family. HemL subfamily. In terms of assembly, homodimer. Requires pyridoxal 5'-phosphate as cofactor.

It is found in the cytoplasm. It carries out the reaction (S)-4-amino-5-oxopentanoate = 5-aminolevulinate. It functions in the pathway porphyrin-containing compound metabolism; protoporphyrin-IX biosynthesis; 5-aminolevulinate from L-glutamyl-tRNA(Glu): step 2/2. This chain is Glutamate-1-semialdehyde 2,1-aminomutase, found in Vibrio campbellii (strain ATCC BAA-1116).